The chain runs to 100 residues: Cell division protein DrpB (100 aa).

The Cytoplasmic portion of the chain corresponds to 1–16 (MEYGSTKMEERLSRSP). Residues 17-37 (GGKLALWAFYTWCGYFVWAMA) form a helical membrane-spanning segment. Residues 38-64 (RYIWVMSRIPDAPVSGFESDLGSTAGK) are Periplasmic-facing. A helical membrane pass occupies residues 65 to 85 (WLGALVGFLFMALVGALLGSI). Residues 86–100 (AWYTRPRPARSRRYE) lie on the Cytoplasmic side of the membrane.

It belongs to the DrpB family. As to quaternary structure, bacterial adenylate cyclase hybrid (BACTH) studies show interaction of this protein with DamX, FtsI, FtsN, FtsQ, YmgF, DedD, FtsA and MalF, as well as weaker interactions with DedD, MalG and PBP2, but this assay often generates false positive results.

It is found in the cell inner membrane. A non-essential division protein that localizes to the septal ring in low ionic strength medium. In terms of biological role, localizes to the septal ring in about 30% of observed cells before cell constriction occurs; localization occurs in low ionic strength medium (0 NaCl) and requires FtsZ but not FtsEX. Overexpression partially restores correct FtsI localization to the division septum in an ftsEX deletion. Isolated as a multicopy suppressor of an ftsEX deletion mutant; it does not suppress other cell division defects (e.g. ftsA, ftsI, ftsQ or ftsZ). This chain is Cell division protein DrpB, found in Escherichia coli (strain K12).